A 249-amino-acid chain; its full sequence is uncharacterized protein (249 aa).

This is an uncharacterized protein from Methanocaldococcus jannaschii (strain ATCC 43067 / DSM 2661 / JAL-1 / JCM 10045 / NBRC 100440) (Methanococcus jannaschii).